The sequence spans 134 residues: Profilin-2 (134 aa).

A disulfide bridge connects residues cysteine 13 and cysteine 118. Residues alanine 84–threonine 100 carry the Involved in PIP2 interaction motif. Residue threonine 114 is modified to Phosphothreonine.

It belongs to the profilin family. In terms of assembly, occurs in many kinds of cells as a complex with monomeric actin in a 1:1 ratio. In terms of processing, phosphorylated by MAP kinases.

It is found in the cytoplasm. Its subcellular location is the cytoskeleton. Binds to actin and affects the structure of the cytoskeleton. At high concentrations, profilin prevents the polymerization of actin, whereas it enhances it at low concentrations. The protein is Profilin-2 of Olea europaea (Common olive).